The chain runs to 561 residues: Putative transport protein YbjL (561 aa).

A run of 5 helical transmembrane segments spans residues 8–28 (LLNG…LCLG), 32–52 (LGSI…LLGQ), 66–86 (FMLF…SIFF), 94–114 (MLAL…GKLF), and 158–178 (NLSL…IVGA). 2 RCK C-terminal domains span residues 200 to 288 (RGLD…SFRN) and 292 to 373 (VFDR…RIGF). The next 5 helical transmembrane spans lie at 383–403 (LLAF…TFQF), 406–426 (FSFG…LGFM), 451–471 (VFMA…LGAI), 475–495 (MLIA…LFGA), and 540–560 (AIAN…WPGL).

It belongs to the AAE transporter (TC 2.A.81) family. YbjL subfamily.

The protein resides in the cell membrane. In Escherichia coli O139:H28 (strain E24377A / ETEC), this protein is Putative transport protein YbjL.